We begin with the raw amino-acid sequence, 380 residues long: Glucose-1-phosphate adenylyltransferase (380 aa).

Residues Gly164, 179–180 (EK), and Ser190 contribute to the alpha-D-glucose 1-phosphate site.

It belongs to the bacterial/plant glucose-1-phosphate adenylyltransferase family. As to quaternary structure, homotetramer.

It catalyses the reaction alpha-D-glucose 1-phosphate + ATP + H(+) = ADP-alpha-D-glucose + diphosphate. It functions in the pathway glycan biosynthesis; glycogen biosynthesis. Functionally, involved in the biosynthesis of ADP-glucose, a building block required for the elongation reactions to produce glycogen. Catalyzes the reaction between ATP and alpha-D-glucose 1-phosphate (G1P) to produce pyrophosphate and ADP-Glc. The sequence is that of Glucose-1-phosphate adenylyltransferase from Streptococcus pneumoniae serotype 2 (strain D39 / NCTC 7466).